We begin with the raw amino-acid sequence, 386 residues long: Succinyl-diaminopimelate desuccinylase (386 aa).

A Zn(2+)-binding site is contributed by H77. D79 is an active-site residue. D110 is a Zn(2+) binding site. The Proton acceptor role is filled by E144. Zn(2+) contacts are provided by E145, E173, and H359.

It belongs to the peptidase M20A family. DapE subfamily. Homodimer. It depends on Zn(2+) as a cofactor. Co(2+) serves as cofactor.

It catalyses the reaction N-succinyl-(2S,6S)-2,6-diaminopimelate + H2O = (2S,6S)-2,6-diaminopimelate + succinate. It participates in amino-acid biosynthesis; L-lysine biosynthesis via DAP pathway; LL-2,6-diaminopimelate from (S)-tetrahydrodipicolinate (succinylase route): step 3/3. Functionally, catalyzes the hydrolysis of N-succinyl-L,L-diaminopimelic acid (SDAP), forming succinate and LL-2,6-diaminopimelate (DAP), an intermediate involved in the bacterial biosynthesis of lysine and meso-diaminopimelic acid, an essential component of bacterial cell walls. This Ralstonia pickettii (strain 12J) protein is Succinyl-diaminopimelate desuccinylase.